Consider the following 246-residue polypeptide: Processing and transport protein (246 aa).

The protein belongs to the herpesviridae PRTP family.

Its function is as follows. This protein may affect translocation of the virus glycoproteins to membranes. It is involved in capsid maturation. The polypeptide is Processing and transport protein (UL28) (Homo sapiens (Human)).